Reading from the N-terminus, the 390-residue chain is Putative nickel insertion protein (390 aa).

It belongs to the LarC family.

The protein is Putative nickel insertion protein of Geobacter metallireducens (strain ATCC 53774 / DSM 7210 / GS-15).